The sequence spans 216 residues: Adenylate kinase (216 aa).

10 to 15 (GAGKGT) is an ATP binding site. Positions 30 to 59 (STGDIFRAHMSQGTPLGKLAKEYVDAGKYV) are NMP. AMP contacts are provided by residues threonine 31, arginine 36, 57–59 (KYV), 85–88 (GYPR), and glutamine 92. The LID stretch occupies residues 126 to 163 (GRRVCRSCGATYHVRFNPPREAGRCDRCGGELYQRSDD). Position 127 (arginine 127) interacts with ATP. Residues cysteine 130 and cysteine 133 each coordinate Zn(2+). Residue 136–137 (TY) coordinates ATP. Cysteine 150 and cysteine 153 together coordinate Zn(2+). The AMP site is built by arginine 160 and arginine 171. Position 199 (glutamine 199) interacts with ATP.

This sequence belongs to the adenylate kinase family. In terms of assembly, monomer.

It is found in the cytoplasm. The enzyme catalyses AMP + ATP = 2 ADP. It functions in the pathway purine metabolism; AMP biosynthesis via salvage pathway; AMP from ADP: step 1/1. Its function is as follows. Catalyzes the reversible transfer of the terminal phosphate group between ATP and AMP. Plays an important role in cellular energy homeostasis and in adenine nucleotide metabolism. This Symbiobacterium thermophilum (strain DSM 24528 / JCM 14929 / IAM 14863 / T) protein is Adenylate kinase.